The chain runs to 353 residues: Quinolinate synthase (353 aa).

Residues His47 and Ser68 each contribute to the iminosuccinate site. Cys113 provides a ligand contact to [4Fe-4S] cluster. Iminosuccinate-binding positions include 139 to 141 (YAN) and Ser156. Cys200 contacts [4Fe-4S] cluster. Iminosuccinate is bound by residues 226–228 (HPE) and Thr243. Residue Cys297 participates in [4Fe-4S] cluster binding.

This sequence belongs to the quinolinate synthase family. Type 1 subfamily. It depends on [4Fe-4S] cluster as a cofactor.

The protein resides in the cytoplasm. The enzyme catalyses iminosuccinate + dihydroxyacetone phosphate = quinolinate + phosphate + 2 H2O + H(+). It functions in the pathway cofactor biosynthesis; NAD(+) biosynthesis; quinolinate from iminoaspartate: step 1/1. Its function is as follows. Catalyzes the condensation of iminoaspartate with dihydroxyacetone phosphate to form quinolinate. In Erwinia tasmaniensis (strain DSM 17950 / CFBP 7177 / CIP 109463 / NCPPB 4357 / Et1/99), this protein is Quinolinate synthase.